The sequence spans 274 residues: Mitochondrial S-adenosylmethionine carrier protein (274 aa).

Solcar repeat units lie at residues 4 to 77, 86 to 168, and 177 to 265; these read PGFV…VKWF, LTPM…LKAL, and VDSW…THSL. The next 6 helical transmembrane spans lie at 5–25, 49–69, 85–105, 142–162, 182–202, and 238–258; these read GFVA…LILF, IYAG…AFFI, YLTP…ACLI, RGYK…FPLW, SAVC…PLDV, and FAGV…FLGA.

The protein belongs to the mitochondrial carrier (TC 2.A.29) family. As to expression, widely expressed. Highly expressed in testis, with moderate expression in brain, heart, kidney, lung, skeletal muscle, pancreas, small intestine and liver, and low expression in spleen.

It is found in the mitochondrion inner membrane. It carries out the reaction S-adenosyl-L-homocysteine(out) + S-adenosyl-L-methionine(in) = S-adenosyl-L-homocysteine(in) + S-adenosyl-L-methionine(out). Its activity is regulated as follows. Strongly inhibited by tannic acid and Bromocresol Purple. Its function is as follows. Mitochondrial S-adenosyl-L-methionine/S-adenosyl-L-homocysteine antiporter. Mediates the exchange of cytosolic S-adenosyl-L-methionine, the predominant methyl-group donor for macromolecule methylation processes, for mitochondrial S-adenosylhomocysteine(SAH), a by-product of methylation reactions. The protein is Mitochondrial S-adenosylmethionine carrier protein of Homo sapiens (Human).